The chain runs to 267 residues: Small ribosomal subunit protein uS2 (267 aa).

A compositionally biased stretch (basic and acidic residues) spans 233 to 250 (RAESDKAETDKVEVEGKG). The interval 233–267 (RAESDKAETDKVEVEGKGEAPAAEAAEVVESADKA) is disordered. Low complexity predominate over residues 251–261 (EAPAAEAAEVV).

This sequence belongs to the universal ribosomal protein uS2 family.

The protein is Small ribosomal subunit protein uS2 of Syntrophotalea carbinolica (strain DSM 2380 / NBRC 103641 / GraBd1) (Pelobacter carbinolicus).